Consider the following 218-residue polypeptide: Octanoyltransferase (218 aa).

The BPL/LPL catalytic domain maps to 32–211 (INTYDEIWFL…KLSQLLNVSI (180 aa)). Substrate-binding positions include 75-82 (RGGQITYH), 142-144 (SLG), and 155-157 (GLS). The Acyl-thioester intermediate role is filled by Cys173.

This sequence belongs to the LipB family.

It localises to the cytoplasm. It carries out the reaction octanoyl-[ACP] + L-lysyl-[protein] = N(6)-octanoyl-L-lysyl-[protein] + holo-[ACP] + H(+). Its pathway is protein modification; protein lipoylation via endogenous pathway; protein N(6)-(lipoyl)lysine from octanoyl-[acyl-carrier-protein]: step 1/2. Catalyzes the transfer of endogenously produced octanoic acid from octanoyl-acyl-carrier-protein onto the lipoyl domains of lipoate-dependent enzymes. Lipoyl-ACP can also act as a substrate although octanoyl-ACP is likely to be the physiological substrate. The protein is Octanoyltransferase of Buchnera aphidicola subsp. Schizaphis graminum (strain Sg).